The chain runs to 252 residues: Probable transcriptional regulatory protein RF_0799 (252 aa).

The segment at 1–21 (MAGHSKFKNIQHRKGAQDKKR) is disordered.

It belongs to the TACO1 family.

It localises to the cytoplasm. The protein is Probable transcriptional regulatory protein RF_0799 of Rickettsia felis (strain ATCC VR-1525 / URRWXCal2) (Rickettsia azadi).